A 169-amino-acid polypeptide reads, in one-letter code: uncharacterized protein (169 aa).

2 disordered regions span residues 32–53 (VSGP…APAP) and 148–169 (VSGS…AGGA).

This is an uncharacterized protein from Homo sapiens (Human).